A 174-amino-acid polypeptide reads, in one-letter code: Adenylate kinase (174 aa).

The NMP stretch occupies residues 12 to 41 (STGDMLRAAIKAGTPLGLEAKKIIDEGGLV). Residues Thr13, Arg18, 39 to 41 (GLV), 67 to 70 (GFPR), and Gln74 contribute to the AMP site. An LID region spans residues 104–141 (GRRVHLASGRTYHVTYNPPKVEGKDDVTGEDLIQRDDD). ATP contacts are provided by residues Arg105 and 114 to 115 (TY). AMP-binding residues include Arg138 and Arg149.

Belongs to the adenylate kinase family. Monomer.

It localises to the cytoplasm. The catalysed reaction is AMP + ATP = 2 ADP. It functions in the pathway purine metabolism; AMP biosynthesis via salvage pathway; AMP from ADP: step 1/1. Its function is as follows. Catalyzes the reversible transfer of the terminal phosphate group between ATP and AMP. Plays an important role in cellular energy homeostasis and in adenine nucleotide metabolism. This Neisseria lactamica protein is Adenylate kinase.